A 153-amino-acid polypeptide reads, in one-letter code: Ribosome maturation factor RimP (153 aa).

Belongs to the RimP family.

The protein localises to the cytoplasm. Its function is as follows. Required for maturation of 30S ribosomal subunits. The protein is Ribosome maturation factor RimP of Vesicomyosocius okutanii subsp. Calyptogena okutanii (strain HA).